The following is a 165-amino-acid chain: Shikimate kinase (165 aa).

ATP is bound at residue 11 to 16 (GAGKTT). Residue Thr-15 participates in Mg(2+) binding. 3 residues coordinate substrate: Asp-33, Arg-57, and Gly-78. Arg-116 serves as a coordination point for ATP. Position 134 (Arg-134) interacts with substrate.

It belongs to the shikimate kinase family. Monomer. It depends on Mg(2+) as a cofactor.

It is found in the cytoplasm. It catalyses the reaction shikimate + ATP = 3-phosphoshikimate + ADP + H(+). Its pathway is metabolic intermediate biosynthesis; chorismate biosynthesis; chorismate from D-erythrose 4-phosphate and phosphoenolpyruvate: step 5/7. Functionally, catalyzes the specific phosphorylation of the 3-hydroxyl group of shikimic acid using ATP as a cosubstrate. The protein is Shikimate kinase of Bacillus cereus (strain G9842).